A 45-amino-acid chain; its full sequence is Large ribosomal subunit protein bL34 (45 aa).

It belongs to the bacterial ribosomal protein bL34 family.

The polypeptide is Large ribosomal subunit protein bL34 (Leifsonia xyli subsp. xyli (strain CTCB07)).